We begin with the raw amino-acid sequence, 142 residues long: Hemoglobin subunit alpha-2 (142 aa).

An N-acetylserine modification is found at Ser-1. The Globin domain maps to 1–142 (SLSTKDKETV…LSRALSEKYR (142 aa)). Residue His-59 coordinates O2. Position 88 (His-88) interacts with heme b.

The protein belongs to the globin family. As to quaternary structure, hb2 is a heterotetramer of two alpha-2 chains and two beta chains. Red blood cells.

Its function is as follows. Involved in oxygen transport from gills to the various peripheral tissues. The polypeptide is Hemoglobin subunit alpha-2 (hba2) (Trematomus newnesi (Dusky notothen)).